Here is a 193-residue protein sequence, read N- to C-terminus: Cytidylate kinase (193 aa).

12–20 (GLPGSGTTT) contacts ATP.

Belongs to the cytidylate kinase family. Type 2 subfamily.

The protein resides in the cytoplasm. It carries out the reaction CMP + ATP = CDP + ADP. It catalyses the reaction dCMP + ATP = dCDP + ADP. In Methanopyrus kandleri (strain AV19 / DSM 6324 / JCM 9639 / NBRC 100938), this protein is Cytidylate kinase.